A 247-amino-acid polypeptide reads, in one-letter code: ATP synthase subunit a (247 aa).

6 helical membrane passes run Ile24 to Met44, Phe82 to Val102, Ile112 to Tyr132, Leu141 to Ile161, Met194 to Val214, and Leu219 to Ile239.

This sequence belongs to the ATPase A chain family. In terms of assembly, F-type ATPases have 2 components, CF(1) - the catalytic core - and CF(0) - the membrane proton channel. CF(1) has five subunits: alpha(3), beta(3), gamma(1), delta(1), epsilon(1). CF(0) has three main subunits: a(1), b(2) and c(9-12). The alpha and beta chains form an alternating ring which encloses part of the gamma chain. CF(1) is attached to CF(0) by a central stalk formed by the gamma and epsilon chains, while a peripheral stalk is formed by the delta and b chains.

Its subcellular location is the cell inner membrane. Functionally, key component of the proton channel; it plays a direct role in the translocation of protons across the membrane. This is ATP synthase subunit a from Nitrobacter hamburgensis (strain DSM 10229 / NCIMB 13809 / X14).